The chain runs to 392 residues: Putative nickel insertion protein (392 aa).

It belongs to the LarC family.

The polypeptide is Putative nickel insertion protein (Methanothrix thermoacetophila (strain DSM 6194 / JCM 14653 / NBRC 101360 / PT) (Methanosaeta thermophila)).